Consider the following 413-residue polypeptide: L-cysteine:1D-myo-inositol 2-amino-2-deoxy-alpha-D-glucopyranoside ligase (413 aa).

Residue Cys-15 participates in Zn(2+) binding. L-cysteinyl-5'-AMP-binding positions include 15-18 (CGIT), Thr-30, and 53-55 (NVT). The 'HIGH' region signature appears at 17–27 (ITPYDATHLGH). A 'ERGGDP' region motif is present at residues 155–160 (ERGGDP). L-cysteinyl-5'-AMP is bound at residue Trp-195. Cys-199 contributes to the Zn(2+) binding site. 217 to 219 (GTD) contributes to the L-cysteinyl-5'-AMP binding site. Residue His-224 coordinates Zn(2+). L-cysteinyl-5'-AMP is bound at residue Val-251. A 'KMSKS' region motif is present at residues 257–261 (KMSKS).

It belongs to the class-I aminoacyl-tRNA synthetase family. MshC subfamily. Monomer. Zn(2+) serves as cofactor.

It carries out the reaction 1D-myo-inositol 2-amino-2-deoxy-alpha-D-glucopyranoside + L-cysteine + ATP = 1D-myo-inositol 2-(L-cysteinylamino)-2-deoxy-alpha-D-glucopyranoside + AMP + diphosphate + H(+). Its function is as follows. Catalyzes the ATP-dependent condensation of GlcN-Ins and L-cysteine to form L-Cys-GlcN-Ins. This Frankia alni (strain DSM 45986 / CECT 9034 / ACN14a) protein is L-cysteine:1D-myo-inositol 2-amino-2-deoxy-alpha-D-glucopyranoside ligase.